We begin with the raw amino-acid sequence, 538 residues long: CWF19-like protein 1 (538 aa).

Positions 298–324 (QGRKRSSTGRDSKSSPHPKQPRKPPQP) are disordered.

This sequence belongs to the CWF19 family. Expressed in many brain regions, including cerebellum, thalamus and occipital, parietal and temporal lobes (at protein level). Also expressed in the spinal cord (at protein level).

In Homo sapiens (Human), this protein is CWF19-like protein 1 (CWF19L1).